Here is a 157-residue protein sequence, read N- to C-terminus: Ribosomal RNA large subunit methyltransferase H (157 aa).

S-adenosyl-L-methionine contacts are provided by residues Leu73, Gly104, and 123-128 (LGPLTL).

This sequence belongs to the RNA methyltransferase RlmH family. As to quaternary structure, homodimer.

It localises to the cytoplasm. It catalyses the reaction pseudouridine(1915) in 23S rRNA + S-adenosyl-L-methionine = N(3)-methylpseudouridine(1915) in 23S rRNA + S-adenosyl-L-homocysteine + H(+). Specifically methylates the pseudouridine at position 1915 (m3Psi1915) in 23S rRNA. The chain is Ribosomal RNA large subunit methyltransferase H from Xylella fastidiosa (strain M12).